Reading from the N-terminus, the 147-residue chain is Urease accessory protein UreE (147 aa).

This sequence belongs to the UreE family.

It is found in the cytoplasm. Involved in urease metallocenter assembly. Binds nickel. Probably functions as a nickel donor during metallocenter assembly. In Marinomonas sp. (strain MWYL1), this protein is Urease accessory protein UreE.